Reading from the N-terminus, the 145-residue chain is U20-hexatoxin-Hi1a (145 aa).

A signal peptide spans 1-16; that stretch reads MYQFLIIVILAAFVNG. Thyroglobulin type-1 domains are found at residues 20–73 and 82–145; these read KTEC…GQPM and ACEC…RLEC. 5 disulfides stabilise this stretch: C23–C45, C56–C63, C85–C106, C117–C124, and C126–C145.

As to expression, expressed by the venom gland.

It is found in the secreted. Cysteine proteinase inhibitor. The polypeptide is U20-hexatoxin-Hi1a (Hadronyche infensa (Fraser island funnel-web spider)).